A 665-amino-acid chain; its full sequence is Translation factor GUF1 homolog, mitochondrial (665 aa).

The N-terminal 35 residues, 1–35, are a transit peptide targeting the mitochondrion; the sequence is MAGAAVLRRSARRIYRHLAAAPAFSRSVLQQPKRL. A disordered region spans residues 34-53; sequence RLLSSQSSPEHGARGAVSGS. In terms of domain architecture, tr-type G spans 61-249; it reads ERVRNFSIIA…AVIERIPSPP (189 aa). GTP contacts are provided by residues 70 to 77, 142 to 146, and 196 to 199; these read AHVDHGKS, DTPGH, and NKID.

This sequence belongs to the TRAFAC class translation factor GTPase superfamily. Classic translation factor GTPase family. LepA subfamily.

Its subcellular location is the mitochondrion inner membrane. The catalysed reaction is GTP + H2O = GDP + phosphate + H(+). Functionally, promotes mitochondrial protein synthesis. May act as a fidelity factor of the translation reaction, by catalyzing a one-codon backward translocation of tRNAs on improperly translocated ribosomes. Binds to mitochondrial ribosomes in a GTP-dependent manner. The polypeptide is Translation factor GUF1 homolog, mitochondrial (Sorghum bicolor (Sorghum)).